The following is a 305-amino-acid chain: Probable aspartoacylase (305 aa).

Zn(2+) contacts are provided by H13 and E16. Residues R55 and 62-63 (NR) each bind substrate. H105 contacts Zn(2+). Substrate is bound by residues E163 and Y273.

Belongs to the AspA/AstE family. Aspartoacylase subfamily. Requires Zn(2+) as cofactor.

The enzyme catalyses an N-acyl-L-aspartate + H2O = a carboxylate + L-aspartate. In Prochlorococcus marinus (strain NATL2A), this protein is Probable aspartoacylase.